The sequence spans 250 residues: DNA repair protein RecO (250 aa).

The protein belongs to the RecO family.

Functionally, involved in DNA repair and RecF pathway recombination. This is DNA repair protein RecO from Rhodopseudomonas palustris (strain TIE-1).